Here is a 152-residue protein sequence, read N- to C-terminus: Aspartate carbamoyltransferase regulatory chain (152 aa).

Positions 108, 113, 137, and 140 each coordinate Zn(2+).

It belongs to the PyrI family. Contains catalytic and regulatory chains. The cofactor is Zn(2+).

Its function is as follows. Involved in allosteric regulation of aspartate carbamoyltransferase. The protein is Aspartate carbamoyltransferase regulatory chain of Neisseria meningitidis serogroup B (strain ATCC BAA-335 / MC58).